Reading from the N-terminus, the 154-residue chain is D-aminoacyl-tRNA deacylase (154 aa).

The Gly-cisPro motif, important for rejection of L-amino acids signature appears at G142–P143.

The protein belongs to the DTD family. As to quaternary structure, homodimer.

The protein resides in the cytoplasm. It carries out the reaction glycyl-tRNA(Ala) + H2O = tRNA(Ala) + glycine + H(+). The enzyme catalyses a D-aminoacyl-tRNA + H2O = a tRNA + a D-alpha-amino acid + H(+). In terms of biological role, an aminoacyl-tRNA editing enzyme that deacylates mischarged D-aminoacyl-tRNAs. Also deacylates mischarged glycyl-tRNA(Ala), protecting cells against glycine mischarging by AlaRS. Acts via tRNA-based rather than protein-based catalysis; rejects L-amino acids rather than detecting D-amino acids in the active site. By recycling D-aminoacyl-tRNA to D-amino acids and free tRNA molecules, this enzyme counteracts the toxicity associated with the formation of D-aminoacyl-tRNA entities in vivo and helps enforce protein L-homochirality. In Polaromonas sp. (strain JS666 / ATCC BAA-500), this protein is D-aminoacyl-tRNA deacylase.